We begin with the raw amino-acid sequence, 201 residues long: dCTP deaminase, dUMP-forming (201 aa).

Residues 117-122 (RSSFGR), Asp135, 143-145 (TLE), Gln163, Tyr177, and Gln188 contribute to the dCTP site. Glu145 (proton donor/acceptor) is an active-site residue.

It belongs to the dCTP deaminase family. As to quaternary structure, homotrimer.

It carries out the reaction dCTP + 2 H2O = dUMP + NH4(+) + diphosphate. Its pathway is pyrimidine metabolism; dUMP biosynthesis; dUMP from dCTP: step 1/1. In terms of biological role, bifunctional enzyme that catalyzes both the deamination of dCTP to dUTP and the hydrolysis of dUTP to dUMP without releasing the toxic dUTP intermediate. In Methanococcus aeolicus (strain ATCC BAA-1280 / DSM 17508 / OCM 812 / Nankai-3), this protein is dCTP deaminase, dUMP-forming.